Consider the following 372-residue polypeptide: Glycerophosphodiester phosphodiesterase GDPD6 (372 aa).

Positions 1–21 (MAFKYLLPLLLLSLLVANCAS) are cleaved as a signal peptide. Positions 32–58 (KHATKKPLQTSRPYNLAHRGSNGELPE) are disordered. Residues 44–362 (PYNLAHRGSN…DFTGSLHNYQ (319 aa)) enclose the GP-PDE domain. N-linked (GlcNAc...) asparagine glycosylation is found at N120, N239, and N260.

This sequence belongs to the glycerophosphoryl diester phosphodiesterase family. As to expression, expressed in flowers and siliques.

It carries out the reaction a sn-glycero-3-phosphodiester + H2O = an alcohol + sn-glycerol 3-phosphate + H(+). The sequence is that of Glycerophosphodiester phosphodiesterase GDPD6 from Arabidopsis thaliana (Mouse-ear cress).